Consider the following 203-residue polypeptide: Holliday junction branch migration complex subunit RuvA (203 aa).

A domain I region spans residues 1–64 (MIGRLRGIIL…EDAQLLYGFN (64 aa)). A domain II region spans residues 65–142 (NKQERTLFKE…KGLHGDLFTP (78 aa)). Residues 143–154 (AVDLVLTSPASP) form a flexible linker region. Residues 155-203 (TSEDAEQEAVAALVALGYKPQEASRMVNKIARPDASSETLIRDALRAAL) form a domain III region.

Belongs to the RuvA family. Homotetramer. Forms an RuvA(8)-RuvB(12)-Holliday junction (HJ) complex. HJ DNA is sandwiched between 2 RuvA tetramers; dsDNA enters through RuvA and exits via RuvB. An RuvB hexamer assembles on each DNA strand where it exits the tetramer. Each RuvB hexamer is contacted by two RuvA subunits (via domain III) on 2 adjacent RuvB subunits; this complex drives branch migration. In the full resolvosome a probable DNA-RuvA(4)-RuvB(12)-RuvC(2) complex forms which resolves the HJ.

Its subcellular location is the cytoplasm. Its function is as follows. The RuvA-RuvB-RuvC complex processes Holliday junction (HJ) DNA during genetic recombination and DNA repair, while the RuvA-RuvB complex plays an important role in the rescue of blocked DNA replication forks via replication fork reversal (RFR). RuvA specifically binds to HJ cruciform DNA, conferring on it an open structure. The RuvB hexamer acts as an ATP-dependent pump, pulling dsDNA into and through the RuvAB complex. HJ branch migration allows RuvC to scan DNA until it finds its consensus sequence, where it cleaves and resolves the cruciform DNA. The sequence is that of Holliday junction branch migration complex subunit RuvA from Salmonella choleraesuis (strain SC-B67).